The primary structure comprises 261 residues: Carnitinyl-CoA dehydratase (261 aa).

The active-site Nucleophile is E111. E131 functions as the Proton acceptor in the catalytic mechanism.

Belongs to the enoyl-CoA hydratase/isomerase family.

It carries out the reaction (R)-carnitinyl-CoA = crotonobetainyl-CoA + H2O. The protein operates within amine and polyamine metabolism; carnitine metabolism. In terms of biological role, catalyzes the reversible dehydration of L-carnitinyl-CoA to crotonobetainyl-CoA. This is Carnitinyl-CoA dehydratase from Escherichia coli (strain SMS-3-5 / SECEC).